Reading from the N-terminus, the 98-residue chain is NADH-ubiquinone oxidoreductase chain 4L (98 aa).

3 helical membrane-spanning segments follow: residues 1 to 21, 29 to 49, and 61 to 81; these read MPFI…GLLM, SLLC…LLCL, and MILL…LVMV.

It belongs to the complex I subunit 4L family. In terms of assembly, core subunit of respiratory chain NADH dehydrogenase (Complex I) which is composed of 45 different subunits.

It localises to the mitochondrion inner membrane. It carries out the reaction a ubiquinone + NADH + 5 H(+)(in) = a ubiquinol + NAD(+) + 4 H(+)(out). Its function is as follows. Core subunit of the mitochondrial membrane respiratory chain NADH dehydrogenase (Complex I) which catalyzes electron transfer from NADH through the respiratory chain, using ubiquinone as an electron acceptor. Part of the enzyme membrane arm which is embedded in the lipid bilayer and involved in proton translocation. The chain is NADH-ubiquinone oxidoreductase chain 4L (MT-ND4L) from Dugong dugon (Dugong).